A 984-amino-acid polypeptide reads, in one-letter code: Ephrin type-B receptor 1 (984 aa).

Residues 1–182 form the Eph LBD domain; that stretch reads ETLMDTRTAT…FFKKCPSVVQ (182 aa). Residues 1-541 lie on the Extracellular side of the membrane; sequence ETLMDTRTAT…KSELREQLPL (541 aa). Fibronectin type-III domains are found at residues 303 to 413 and 414 to 528; these read VPSG…TNQA and APST…TLTD. Residues Asn315, Asn407, and Asn480 are each glycosylated (N-linked (GlcNAc...) asparagine). A helical transmembrane segment spans residues 542–562; it reads IAGSAAAGVVFIVSLVAISIV. Topologically, residues 563–984 are cytoplasmic; that stretch reads CSRKRAYSKE…QMSQSPTSMA (422 aa). In terms of domain architecture, Protein kinase spans 619–882; sequence VKIEEVIGAG…EIVNTLDKMI (264 aa). ATP-binding positions include 625–633 and Lys651; that span reads IGAGEFGEV. Asp744 functions as the Proton acceptor in the catalytic mechanism. The SAM domain occupies 911 to 975; it reads TAFTSVEDWL…LNSIQSMRVQ (65 aa). The PDZ-binding motif lies at 982-984; sequence SMA.

Belongs to the protein kinase superfamily. Tyr protein kinase family. Ephrin receptor subfamily. As to quaternary structure, heterotetramer upon binding of the ligand. The heterotetramer is composed of an ephrin dimer and a receptor dimer. Oligomerization is probably required to induce biological responses. In terms of processing, phosphorylated. Autophosphorylation is stimulated by ligands. As to expression, expressed at high levels in the 10-day embryo, and in adult brain, lung, heart and skeletal muscle. Low levels of expression detected in all other adult tissues tested.

Its subcellular location is the cell membrane. It localises to the early endosome membrane. The protein resides in the cell projection. It is found in the dendrite. It catalyses the reaction L-tyrosyl-[protein] + ATP = O-phospho-L-tyrosyl-[protein] + ADP + H(+). Receptor tyrosine kinase which binds promiscuously transmembrane ephrin-B family ligands residing on adjacent cells, leading to contact-dependent bidirectional signaling into neighboring cells. The signaling pathway downstream of the receptor is referred to as forward signaling while the signaling pathway downstream of the ephrin ligand is referred to as reverse signaling. May play a role in axon guidance during nervous system development. May also play an important redundant role with other ephrin-B receptors in development and maturation of dendritic spines and synapse formation. More generally, may play a role in targeted cell migration and adhesion. Upon activation by ephrin-B ligands activates the MAPK/ERK and the JNK signaling cascades to regulate cell migration and adhesion respectively. The polypeptide is Ephrin type-B receptor 1 (EPHB1) (Gallus gallus (Chicken)).